Here is a 333-residue protein sequence, read N- to C-terminus: Holliday junction branch migration complex subunit RuvB (333 aa).

The segment at 4 to 185 (IDRLVSTDVL…FGIVQRLEFY (182 aa)) is large ATPase domain (RuvB-L). ATP-binding positions include isoleucine 24, arginine 25, glycine 66, lysine 69, threonine 70, threonine 71, 132–134 (EDY), arginine 175, tyrosine 185, and arginine 222. Threonine 70 is a binding site for Mg(2+). Positions 186 to 256 (SVPDLEHIVS…IAIKALEMLN (71 aa)) are small ATPAse domain (RuvB-S). Residues 259–333 (KEGLDYMDSK…HAYQHFICGG (75 aa)) form a head domain (RuvB-H) region. Residues arginine 295, arginine 314, and arginine 319 each coordinate DNA.

It belongs to the RuvB family. In terms of assembly, homohexamer. Forms an RuvA(8)-RuvB(12)-Holliday junction (HJ) complex. HJ DNA is sandwiched between 2 RuvA tetramers; dsDNA enters through RuvA and exits via RuvB. An RuvB hexamer assembles on each DNA strand where it exits the tetramer. Each RuvB hexamer is contacted by two RuvA subunits (via domain III) on 2 adjacent RuvB subunits; this complex drives branch migration. In the full resolvosome a probable DNA-RuvA(4)-RuvB(12)-RuvC(2) complex forms which resolves the HJ.

Its subcellular location is the cytoplasm. The catalysed reaction is ATP + H2O = ADP + phosphate + H(+). The RuvA-RuvB-RuvC complex processes Holliday junction (HJ) DNA during genetic recombination and DNA repair, while the RuvA-RuvB complex plays an important role in the rescue of blocked DNA replication forks via replication fork reversal (RFR). RuvA specifically binds to HJ cruciform DNA, conferring on it an open structure. The RuvB hexamer acts as an ATP-dependent pump, pulling dsDNA into and through the RuvAB complex. RuvB forms 2 homohexamers on either side of HJ DNA bound by 1 or 2 RuvA tetramers; 4 subunits per hexamer contact DNA at a time. Coordinated motions by a converter formed by DNA-disengaged RuvB subunits stimulates ATP hydrolysis and nucleotide exchange. Immobilization of the converter enables RuvB to convert the ATP-contained energy into a lever motion, pulling 2 nucleotides of DNA out of the RuvA tetramer per ATP hydrolyzed, thus driving DNA branch migration. The RuvB motors rotate together with the DNA substrate, which together with the progressing nucleotide cycle form the mechanistic basis for DNA recombination by continuous HJ branch migration. Branch migration allows RuvC to scan DNA until it finds its consensus sequence, where it cleaves and resolves cruciform DNA. This chain is Holliday junction branch migration complex subunit RuvB, found in Hamiltonella defensa subsp. Acyrthosiphon pisum (strain 5AT).